A 293-amino-acid chain; its full sequence is Glycine--tRNA ligase alpha subunit (293 aa).

Belongs to the class-II aminoacyl-tRNA synthetase family. In terms of assembly, tetramer of two alpha and two beta subunits.

It is found in the cytoplasm. It catalyses the reaction tRNA(Gly) + glycine + ATP = glycyl-tRNA(Gly) + AMP + diphosphate. The chain is Glycine--tRNA ligase alpha subunit from Acaryochloris marina (strain MBIC 11017).